The primary structure comprises 720 residues: Protein-glutamine gamma-glutamyltransferase 5 (720 aa).

Ala-2 is subject to N-acetylalanine. Residues Cys-278, His-337, and Asp-360 contribute to the active site. Residues Asn-400, Asp-402, Glu-448, and Glu-453 each coordinate Ca(2+). The interval 470-499 (HGSQRGAELQPSRPTSLSQDSPRSLHTPSL) is disordered. Residues 481 to 496 (SRPTSLSQDSPRSLHT) show a composition bias toward polar residues.

It belongs to the transglutaminase superfamily. Transglutaminase family. The cofactor is Ca(2+). As to expression, expressed in foreskin keratinocytes.

It localises to the cytoplasm. It carries out the reaction L-glutaminyl-[protein] + L-lysyl-[protein] = [protein]-L-lysyl-N(6)-5-L-glutamyl-[protein] + NH4(+). Its function is as follows. Catalyzes the cross-linking of proteins and the conjugation of polyamines to proteins. Contributes to the formation of the cornified cell envelope of keratinocytes. This is Protein-glutamine gamma-glutamyltransferase 5 (TGM5) from Homo sapiens (Human).